Consider the following 70-residue polypeptide: DNA-directed RNA polymerase subunit omega (70 aa).

This sequence belongs to the RNA polymerase subunit omega family. In terms of assembly, the RNAP catalytic core consists of 2 alpha, 1 beta, 1 beta' and 1 omega subunit. When a sigma factor is associated with the core the holoenzyme is formed, which can initiate transcription.

The catalysed reaction is RNA(n) + a ribonucleoside 5'-triphosphate = RNA(n+1) + diphosphate. In terms of biological role, promotes RNA polymerase assembly. Latches the N- and C-terminal regions of the beta' subunit thereby facilitating its interaction with the beta and alpha subunits. The protein is DNA-directed RNA polymerase subunit omega of Shouchella clausii (strain KSM-K16) (Alkalihalobacillus clausii).